The primary structure comprises 1024 residues: MSKYKNSSLLNDQGGVRQPSLSNGSSVLGISNQLPPNSLFHLFSTNNQQSTTTPTTVTIQPPSSSISTPSPTTNNTVSGGGGIQTAGSSTSSASSVVGGGGGTTTPTNSNIVVIESNKEDDKECGTILMEINKGIRSGNLGEQIESILFFSHLIKFHPSPLIVNSVITRLSDIFRTTSNTVKYRILKVFQECSSEIHKVSNIEEVLKRIHSVILSNDPIARSLSLRVLGSVPHLIADKLYIHHSIRTCMQSHDQVELEATIFIMDKLCEISPLFSDSIIEKIHTVIQNVETPPITKLKYTRLFRHMHHSHSIATQSKEMLVGLLDLYPSVGFVSVILDTLTNLSLKHILYIDDHIKFLKNYGFSDSRVVVKVIALKCLQKLAITSPHSQFPIIEIFNIIKETPSKSYREIKYNALLLLSILSQSQYTKILELNQANDNDLIDILYQYSLDYDFKLSELSIQTLVNIIVESTDNNNNNNNNNNNNNNNNNNNNNNNNNNNNNNKLIESILNQTVNNICVILKTQFTTSTNNNTNINENKSTLNKTSVFLKSIIRLIKKDPKPLKSITTTIISLLNEIPYSILKSLFHCLSMCIPMNKSVLNQNGWFKLILDYLNNLIIKENSVQLINNNFNNNNNNNNNSNNNNNNIINRNNNGISNGINKQDCKYSIPMSIFMCIFKTFDENNQKIQEITEQLLPLIQYILENPKPDQLWSCYNLAQLSQRHGFHKIAMVIYSTLIHKVESECNYLWLKGLLSIATLENEISIYSITTNKNNTNNNNNNNNSKILNQLSNYHTSIVSLKASSQQERSLQFQEDFILLHEKYLFNILNLKSFLLECNDDGNNNNNNNNNNNNNNNNNNNNNNNNNNEILLKRFLSKSLIFRQLEQKYQLLLNIQSKSINHTVPLDTKQILESFIFSCNLIVKLIDLIVINKNNNNNNNINANGINHQQEQRYQQHQQSQNQELINYFPLFKFCEFIQKKLNQQHSIPSSSSSSSSTTNPISFLDQVLNGLIKIPMVYPSSFYFKF.

Composition is skewed to polar residues over residues 1 to 11 and 19 to 36; these read MSKYKNSSLLN and PSLSNGSSVLGISNQLPP. Disordered stretches follow at residues 1–109, 472–502, and 842–863; these read MSKY…PTNS, DNNNNNNNNNNNNNNNNNNNNNNNNNNNNNN, and NNNNNNNNNNNNNNNNNNNNNN. 3 stretches are compositionally biased toward low complexity: residues 44-77, 85-96, and 473-502; these read STNNQQSTTTPTTVTIQPPSSSISTPSPTTNNTV, TAGSSTSSASSV, and NNNNNNNNNNNNNNNNNNNNNNNNNNNNNN.

It belongs to the Integrator subunit 7 family. In terms of assembly, component of the Integrator complex. The core complex associates with protein phosphatase 2A subunits, to form the Integrator-PP2A (INTAC) complex.

It localises to the nucleus. Its subcellular location is the chromosome. It is found in the cytoplasm. In terms of biological role, component of the integrator complex, a multiprotein complex that terminates RNA polymerase II (Pol II) transcription in the promoter-proximal region of genes. The integrator complex provides a quality checkpoint during transcription elongation by driving premature transcription termination of transcripts that are unfavorably configured for transcriptional elongation: the complex terminates transcription by (1) catalyzing dephosphorylation of the C-terminal domain (CTD) of Pol II subunit polr2a, (2) degrading the exiting nascent RNA transcript via endonuclease activity and (3) promoting the release of Pol II from bound DNA. The integrator complex is also involved in terminating the synthesis of non-coding Pol II transcripts, such as enhancer RNAs (eRNAs), small nuclear RNAs (snRNAs), telomerase RNAs and long non-coding RNAs (lncRNAs). The chain is Integrator complex subunit 7 homolog (ints7) from Dictyostelium discoideum (Social amoeba).